Consider the following 599-residue polypeptide: MSFGTRISRALRFLEIPVKNRASVNFLRNPDLQPIKSVNQTWGFWSNFAYWGVLSFNVGMWIGGSSALTVGLSYSETIGAFIIADLLTILFALANSCPGYDWKVGFTLAQRFVFGIYGSALGIIIRILMSIVYYGSNAWLGGLCVNMILDSWSHHYLHLPNTLSSKVAMTTKELIGFIIFHILTAFCYFMKPYHMNYILIWSCVGTFFAMLGMVIYLTKSAHGVGDLFTSTHSTVTGSKKAWAWVYTISYWYGSVSPGCTNQSDFSRFGSSNCAIWTGTIVALLIPATLIPVFGIIGASACEKLYGQTFWMPMDIFDNWLTTNYSAGARAATFFCGFCFVMSQISYTISNCGFASGMDLAGLLPKYVDIKRGAIFAACVSWACLPWNFYNSSSTFLTVMSSFGVVMTPIITVMICDNFLIRKRQYSVTNAFVLKGEYYFTKGVNWRAIVAWVCGMAPGLPGIAWEVNNDYFHNTGIINFFYGDSFFSFLISFFVYWGLCLLFPFKITVKHDDKDYYGAFTDEEARKKGMVPYSEISEEEIRAYTLGECFTSGHEYKPESSDDELPELTKTSSENTKVFEIVHQKDNEKESSTSSEKQIA.

Helical transmembrane passes span 42 to 62, 78 to 98, 112 to 132, 174 to 194, 197 to 217, 280 to 300, 333 to 353, 372 to 392, 395 to 415, 447 to 467, and 484 to 504; these read WGFW…GMWI, IGAF…NSCP, FVFG…MSIV, LIGF…KPYH, YILI…VIYL, IVAL…GASA, FFCG…NCGF, GAIF…YNSS, FLTV…VMIC, AIVA…WEVN, and SFFS…LFPF. The disordered stretch occupies residues 553-599; the sequence is HEYKPESSDDELPELTKTSSENTKVFEIVHQKDNEKESSTSSEKQIA. Residues serine 560 and serine 572 each carry the phosphoserine modification. Residues 579-590 are compositionally biased toward basic and acidic residues; the sequence is EIVHQKDNEKES.

It belongs to the purine-cytosine permease (2.A.39) family.

Its subcellular location is the membrane. Its function is as follows. Low affinity thiamine transporter responsible for intake of thiamine. It is possible that the primary function is the uptake of closely related compounds and that thiamine transport is a secondary activity of these proteins. This Saccharomyces cerevisiae (strain ATCC 204508 / S288c) (Baker's yeast) protein is Thiamine transporter THI72 (THI72).